Consider the following 173-residue polypeptide: Cell division protein SepF (173 aa).

The interval 31-82 (FEDFDEPLDERPSRNRSPRDDSRNNAVTDSSDHSPSRNERRSPAPAPATADL) is disordered. Basic and acidic residues-rich tracts occupy residues 39-53 (DERP…DDSR) and 60-72 (SSDH…ERRS).

It belongs to the SepF family. In terms of assembly, homodimer. Interacts with FtsZ.

The protein resides in the cytoplasm. Cell division protein that is part of the divisome complex and is recruited early to the Z-ring. Probably stimulates Z-ring formation, perhaps through the cross-linking of FtsZ protofilaments. Its function overlaps with FtsA. The polypeptide is Cell division protein SepF (Thermobifida fusca (strain YX)).